We begin with the raw amino-acid sequence, 421 residues long: Serine hydroxymethyltransferase (421 aa).

(6S)-5,6,7,8-tetrahydrofolate contacts are provided by residues leucine 118 and 122–124 (GHL). Position 226 is an N6-(pyridoxal phosphate)lysine (lysine 226).

The protein belongs to the SHMT family. As to quaternary structure, homodimer. Requires pyridoxal 5'-phosphate as cofactor.

The protein resides in the cytoplasm. The catalysed reaction is (6R)-5,10-methylene-5,6,7,8-tetrahydrofolate + glycine + H2O = (6S)-5,6,7,8-tetrahydrofolate + L-serine. It participates in one-carbon metabolism; tetrahydrofolate interconversion. Its pathway is amino-acid biosynthesis; glycine biosynthesis; glycine from L-serine: step 1/1. Functionally, catalyzes the reversible interconversion of serine and glycine with tetrahydrofolate (THF) serving as the one-carbon carrier. This reaction serves as the major source of one-carbon groups required for the biosynthesis of purines, thymidylate, methionine, and other important biomolecules. Also exhibits THF-independent aldolase activity toward beta-hydroxyamino acids, producing glycine and aldehydes, via a retro-aldol mechanism. The protein is Serine hydroxymethyltransferase of Mycoplasmopsis agalactiae (strain NCTC 10123 / CIP 59.7 / PG2) (Mycoplasma agalactiae).